The following is a 257-amino-acid chain: Pyridoxine 5'-phosphate synthase (257 aa).

3-amino-2-oxopropyl phosphate is bound at residue N6. 8–9 is a 1-deoxy-D-xylulose 5-phosphate binding site; it reads DH. 3-amino-2-oxopropyl phosphate is bound at residue R17. Residue H41 is the Proton acceptor of the active site. Residues R43 and H48 each contribute to the 1-deoxy-D-xylulose 5-phosphate site. The active-site Proton acceptor is the E68. T98 provides a ligand contact to 1-deoxy-D-xylulose 5-phosphate. Residue H210 is the Proton donor of the active site. 3-amino-2-oxopropyl phosphate-binding positions include G211 and 232–233; that span reads GQ.

This sequence belongs to the PNP synthase family. As to quaternary structure, homooctamer; tetramer of dimers.

Its subcellular location is the cytoplasm. It catalyses the reaction 3-amino-2-oxopropyl phosphate + 1-deoxy-D-xylulose 5-phosphate = pyridoxine 5'-phosphate + phosphate + 2 H2O + H(+). It functions in the pathway cofactor biosynthesis; pyridoxine 5'-phosphate biosynthesis; pyridoxine 5'-phosphate from D-erythrose 4-phosphate: step 5/5. Functionally, catalyzes the complicated ring closure reaction between the two acyclic compounds 1-deoxy-D-xylulose-5-phosphate (DXP) and 3-amino-2-oxopropyl phosphate (1-amino-acetone-3-phosphate or AAP) to form pyridoxine 5'-phosphate (PNP) and inorganic phosphate. The polypeptide is Pyridoxine 5'-phosphate synthase (Campylobacter jejuni subsp. doylei (strain ATCC BAA-1458 / RM4099 / 269.97)).